A 266-amino-acid polypeptide reads, in one-letter code: Protein crossbronx-like (266 aa).

A UBC core domain is found at 15 to 178 (KQGYHILAEY…VQEQAILSRN (164 aa)). The tract at residues 234–266 (SSRQLDEEEANQVEKLHRGRIPEHQREESEVSL) is disordered. Over residues 245–266 (QVEKLHRGRIPEHQREESEVSL) the composition is skewed to basic and acidic residues.

The protein belongs to the ubiquitin-conjugating enzyme family. FTS subfamily.

The polypeptide is Protein crossbronx-like (Drosophila melanogaster (Fruit fly)).